Reading from the N-terminus, the 863-residue chain is Disintegrin and metalloproteinase domain-containing protein 15 (863 aa).

The signal sequence occupies residues 1–17 (MRLALLWALGLLGAGSP). Residues 18–206 (LPSWPLPNIG…LGQRHIRRRR (189 aa)) constitute a propeptide that is removed on maturation. The interval 22–45 (PLPNIGGTEEQQAESEKAPREPLE) is disordered. Basic and acidic residues predominate over residues 35–44 (ESEKAPREPL). The short motif at 177-184 (HTCALSWR) is the Cysteine switch element. Zn(2+) is bound at residue C179. At 207–696 (DVVTETKTVE…QLKATSSLTT (490 aa)) the chain is on the extracellular side. Positions 213-414 (KTVELVIVAD…GMGSCLFERL (202 aa)) constitute a Peptidase M12B domain. N-linked (GlcNAc...) asparagine glycosylation is present at N237. Cystine bridges form between C323–C409, C365–C393, C367–C376, and C480–C500. H348 is a binding site for Zn(2+). The active site involves E349. 2 residues coordinate Zn(2+): H352 and H358. Residues N389 and N392 are each glycosylated (N-linked (GlcNAc...) asparagine). The 88-residue stretch at 421–508 (AAFCGNMFVE…QCPPDVSLGD (88 aa)) folds into the Disintegrin domain. Positions 484-486 (RGD) match the Cell attachment site motif. Residues N606 and N611 are each glycosylated (N-linked (GlcNAc...) asparagine). Intrachain disulfides connect C657–C667, C661–C673, and C675–C684. The EGF-like domain maps to 657-685 (CRSKCHGHGVCDSNRHCYCEEGWAPPDCT). A helical membrane pass occupies residues 697–717 (GLLLSLLVLLVLVMLGASYWY). Phosphotyrosine; by HCK and LCK is present on residues Y715 and Y735. At 718 to 863 (RARLHQRLCQ…PPPTVSSLYL (146 aa)) the chain is on the cytoplasmic side. Positions 736–863 (RAAQSGPSER…PPPTVSSLYL (128 aa)) are disordered. Positions 767 to 778 (PAPPSRPLPPDP) are enriched in pro residues. Basic and acidic residues predominate over residues 779-789 (VSKRLQAELAD). Pro residues-rich tracts occupy residues 791–800 (PNPPTRPLPA) and 813–824 (AKPPPPRKPLPA). 2 short sequence motifs (SH3-binding) span residues 815–821 (PPPPRKP) and 850–856 (RPAPPPP).

As to quaternary structure, interacts with ITAGV-ITGB3 (vitronectin receptor). Interacts with SH3GL2 and SNX9; this interaction occurs preferentially with ADAM15 precursor, rather than the processed form, suggesting it occurs in a secretory pathway compartment prior to the medial Golgi. Interacts with ITAG9-ITGB1. Interacts specifically with Src family protein-tyrosine kinases (PTKs). Interacts with SH3PXD2A. Interacts with ITAGV-ITGB1. Interacts with GRB2, HCK, ITSN1, ITSN2, LYN, MAPK1, MAPK3, NCF1, NCK1, nephrocystin, PTK6, SNX33, LCK and SRC. The cofactor is Zn(2+). The precursor is cleaved by a furin endopeptidase. Post-translationally, phosphorylation increases association with PTKs. Expressed in colon and small intestine. Expressed in airway smooth muscle and glomerular mesangial cells (at protein level). Ubiquitously expressed. Overexpressed in atherosclerotic lesions. Constitutively expressed in cultured endothelium and smooth muscle. Expressed in chondrocytes. Expressed in airway smooth muscle and glomerular mesangial cells.

The protein resides in the endomembrane system. The protein localises to the cell junction. It is found in the adherens junction. Its subcellular location is the cell projection. It localises to the cilium. The protein resides in the flagellum. The protein localises to the cytoplasmic vesicle. It is found in the secretory vesicle. Its subcellular location is the acrosome. With respect to regulation, inhibited by hydroxamate-type metalloproteinase inhibitors such as marimastat. Inhibited by metalloproteinase inhibitor 2 (TIMP-2) and TIMP-3 at nanomolar concentrations. Not significantly inhibited by TIMP-1 at concentrations of up to 100 nM. Not activated by PMA or ionomycin. In terms of biological role, active metalloproteinase with gelatinolytic and collagenolytic activity. Plays a role in the wound healing process. Mediates both heterotypic intraepithelial cell/T-cell interactions and homotypic T-cell aggregation. Inhibits beta-1 integrin-mediated cell adhesion and migration of airway smooth muscle cells. Suppresses cell motility on or towards fibronectin possibly by driving alpha-v/beta-1 integrin (ITAGV-ITGB1) cell surface expression via ERK1/2 inactivation. Cleaves E-cadherin in response to growth factor deprivation. Plays a role in glomerular cell migration. Plays a role in pathological neovascularization. May play a role in cartilage remodeling. May be proteolytically processed, during sperm epididymal maturation and the acrosome reaction. May play a role in sperm-egg binding through its disintegrin domain. The polypeptide is Disintegrin and metalloproteinase domain-containing protein 15 (ADAM15) (Homo sapiens (Human)).